A 269-amino-acid polypeptide reads, in one-letter code: 3-methyl-2-oxobutanoate hydroxymethyltransferase (269 aa).

2 residues coordinate Mg(2+): Asp-48 and Asp-87. Residues 48–49 (DS), Asp-87, and Lys-116 each bind 3-methyl-2-oxobutanoate. Glu-118 serves as a coordination point for Mg(2+). Glu-185 serves as the catalytic Proton acceptor.

The protein belongs to the PanB family. Homodecamer; pentamer of dimers. Mg(2+) is required as a cofactor.

It localises to the cytoplasm. The catalysed reaction is 3-methyl-2-oxobutanoate + (6R)-5,10-methylene-5,6,7,8-tetrahydrofolate + H2O = 2-dehydropantoate + (6S)-5,6,7,8-tetrahydrofolate. The protein operates within cofactor biosynthesis; (R)-pantothenate biosynthesis; (R)-pantoate from 3-methyl-2-oxobutanoate: step 1/2. Catalyzes the reversible reaction in which hydroxymethyl group from 5,10-methylenetetrahydrofolate is transferred onto alpha-ketoisovalerate to form ketopantoate. The sequence is that of 3-methyl-2-oxobutanoate hydroxymethyltransferase from Campylobacter curvus (strain 525.92).